Consider the following 88-residue polypeptide: Conotoxin MaIr34 (88 aa).

Positions 1 to 21 (MKLTCVIVAVLFLTAWTFVMA) are cleaved as a signal peptide. Residues 22–53 (DDPRDGPDTAVRGGKRFWKARNEMNSAASKLN) constitute a propeptide that is removed on maturation. Intrachain disulfides connect cysteine 57–cysteine 75, cysteine 64–cysteine 79, and cysteine 74–cysteine 83.

It belongs to the conotoxin O1 superfamily. Expressed by the venom duct.

The protein resides in the secreted. This chain is Conotoxin MaIr34, found in Conus marmoreus (Marble cone).